Here is a 529-residue protein sequence, read N- to C-terminus: uncharacterized protein (529 aa).

The span at 1–11 (MSSSKIKELRE) shows a compositional bias: basic and acidic residues. Disordered regions lie at residues 1–222 (MSSS…IPYS), 237–256 (PFLESKVLPQNNETSDEENV), 271–372 (AFLQ…TAAP), and 393–488 (GSGN…PSFT). Residues 27 to 40 (MQQNQPRPATTTPP) show a composition bias toward polar residues. Positions 83-95 (TKGRAHPRSRRPP) are enriched in basic residues. Polar residues predominate over residues 110 to 125 (NTGSTKAADTKSSVEA). S128 is modified (phosphoserine). A compositionally biased stretch (polar residues) spans 170 to 199 (TTKAVEATTSKASSAHTDTLATSASNSDRG). S217 is subject to Phosphoserine. A compositionally biased stretch (polar residues) spans 237–249 (PFLESKVLPQNNE). Over residues 321–334 (SSPLSFSASKSPAA) the composition is skewed to low complexity. The segment covering 336-362 (DSSTKTPTEQVNVVSKQAPTTSSTSVI) has biased composition (polar residues). A compositionally biased stretch (basic and acidic residues) spans 409–426 (ERTKSLSKESPVEPEKPA). The segment covering 430–455 (ATSSSTPTTENKESWTNQGIKSSQQR) has biased composition (polar residues). Over residues 456–470 (SANASPATSPSNQAS) the composition is skewed to low complexity. Residues 471 to 488 (IHASFTKESSTHSSPSFT) are compositionally biased toward polar residues.

Its subcellular location is the cytoplasm. This is an uncharacterized protein from Schizosaccharomyces pombe (strain 972 / ATCC 24843) (Fission yeast).